Here is a 128-residue protein sequence, read N- to C-terminus: Platelet basic protein (128 aa).

A signal peptide spans 1–34; it reads MSLRLDTTPSCNSARPLHALQVLLLLSLLLTALA. 2 disulfides stabilise this stretch: Cys63–Cys89 and Cys65–Cys105.

It belongs to the intercrine alpha (chemokine CxC) family. In terms of assembly, beta-thromboglobulin is a homotetramer. In terms of processing, proteolytic removal of residues 1-9 produces the active peptide connective tissue-activating peptide III (CTAP-III) (low-affinity platelet factor IV (LA-PF4)). Proteolytic removal of residues 1-13 produces the active peptide beta-thromboglobulin, which is released from platelets along with platelet factor 4 and platelet-derived growth factor. Post-translationally, NAP-2(1-66) is produced by proteolytical processing, probably after secretion by leukocytes other than neutrophils. In terms of processing, NAP-2(73) and NAP-2(74) seem not be produced by proteolytical processing of secreted precursors but are released in an active form from platelets.

The protein localises to the secreted. Functionally, LA-PF4 stimulates DNA synthesis, mitosis, glycolysis, intracellular cAMP accumulation, prostaglandin E2 secretion, and synthesis of hyaluronic acid and sulfated glycosaminoglycan. It also stimulates the formation and secretion of plasminogen activator by human synovial cells. NAP-2 is a ligand for CXCR1 and CXCR2, and NAP-2, NAP-2(73), NAP-2(74), NAP-2(1-66), and most potent NAP-2(1-63) are chemoattractants and activators for neutrophils. TC-1 and TC-2 are antibacterial proteins, in vitro released from activated platelet alpha-granules. CTAP-III(1-81) is more potent than CTAP-III desensitize chemokine-induced neutrophil activation. The protein is Platelet basic protein (PPBP) of Homo sapiens (Human).